A 299-amino-acid chain; its full sequence is Protease HtpX homolog (299 aa).

The next 2 helical transmembrane spans lie at 14–34 (IVLLIVFFMLLAAIGAAVGYL) and 39–59 (LVGGMAIALIIGFIYAFSMIF). His143 lines the Zn(2+) pocket. The active site involves Glu144. His147 contributes to the Zn(2+) binding site. 2 helical membrane-spanning segments follow: residues 158–178 (IAVALASAVTLISSIGGRMMW) and 198–218 (IILLIFSLLAIILAPLAASLV). Residue Glu227 participates in Zn(2+) binding.

This sequence belongs to the peptidase M48B family. It depends on Zn(2+) as a cofactor.

Its subcellular location is the cell membrane. In Streptococcus mutans serotype c (strain ATCC 700610 / UA159), this protein is Protease HtpX homolog.